The sequence spans 124 residues: Small ribosomal subunit protein bS16 (124 aa).

A disordered region spans residues 88 to 124 (VPEQTKQAQPKAKAQERLREAEEKARAAAEAAASAEG). Over residues 100–114 (KAQERLREAEEKARA) the composition is skewed to basic and acidic residues. Positions 115 to 124 (AAEAAASAEG) are enriched in low complexity.

It belongs to the bacterial ribosomal protein bS16 family.

The polypeptide is Small ribosomal subunit protein bS16 (Rhodospirillum rubrum (strain ATCC 11170 / ATH 1.1.1 / DSM 467 / LMG 4362 / NCIMB 8255 / S1)).